A 491-amino-acid polypeptide reads, in one-letter code: Ketol-acid reductoisomerase (NADP(+)) (491 aa).

A KARI N-terminal Rossmann domain is found at 15-208; the sequence is AQLGKCRFMG…GGHRAGVLES (194 aa). NADP(+)-binding positions include 45–48, Arg-68, Arg-76, Ser-78, and 108–110; these read CGAQ and DKQ. His-132 is an active-site residue. Residue Gly-158 coordinates NADP(+). KARI C-terminal knotted domains follow at residues 209–344 and 345–484; these read SFVA…TAPQ and YEGK…MTDM. Positions 217, 221, 389, and 393 each coordinate Mg(2+). A substrate-binding site is contributed by Ser-414.

This sequence belongs to the ketol-acid reductoisomerase family. The cofactor is Mg(2+).

It carries out the reaction (2R)-2,3-dihydroxy-3-methylbutanoate + NADP(+) = (2S)-2-acetolactate + NADPH + H(+). The catalysed reaction is (2R,3R)-2,3-dihydroxy-3-methylpentanoate + NADP(+) = (S)-2-ethyl-2-hydroxy-3-oxobutanoate + NADPH + H(+). It functions in the pathway amino-acid biosynthesis; L-isoleucine biosynthesis; L-isoleucine from 2-oxobutanoate: step 2/4. Its pathway is amino-acid biosynthesis; L-valine biosynthesis; L-valine from pyruvate: step 2/4. Involved in the biosynthesis of branched-chain amino acids (BCAA). Catalyzes an alkyl-migration followed by a ketol-acid reduction of (S)-2-acetolactate (S2AL) to yield (R)-2,3-dihydroxy-isovalerate. In the isomerase reaction, S2AL is rearranged via a Mg-dependent methyl migration to produce 3-hydroxy-3-methyl-2-ketobutyrate (HMKB). In the reductase reaction, this 2-ketoacid undergoes a metal-dependent reduction by NADPH to yield (R)-2,3-dihydroxy-isovalerate. This Citrobacter koseri (strain ATCC BAA-895 / CDC 4225-83 / SGSC4696) protein is Ketol-acid reductoisomerase (NADP(+)).